A 616-amino-acid polypeptide reads, in one-letter code: Dihydroxy-acid dehydratase (616 aa).

Position 81 (Asp81) interacts with Mg(2+). Cys122 provides a ligand contact to [2Fe-2S] cluster. 2 residues coordinate Mg(2+): Asp123 and Lys124. Lys124 is subject to N6-carboxylysine. Cys195 is a binding site for [2Fe-2S] cluster. Glu491 lines the Mg(2+) pocket. Ser517 acts as the Proton acceptor in catalysis.

The protein belongs to the IlvD/Edd family. Homodimer. Requires [2Fe-2S] cluster as cofactor. Mg(2+) serves as cofactor.

It carries out the reaction (2R)-2,3-dihydroxy-3-methylbutanoate = 3-methyl-2-oxobutanoate + H2O. The enzyme catalyses (2R,3R)-2,3-dihydroxy-3-methylpentanoate = (S)-3-methyl-2-oxopentanoate + H2O. Its pathway is amino-acid biosynthesis; L-isoleucine biosynthesis; L-isoleucine from 2-oxobutanoate: step 3/4. It participates in amino-acid biosynthesis; L-valine biosynthesis; L-valine from pyruvate: step 3/4. Functionally, functions in the biosynthesis of branched-chain amino acids. Catalyzes the dehydration of (2R,3R)-2,3-dihydroxy-3-methylpentanoate (2,3-dihydroxy-3-methylvalerate) into 2-oxo-3-methylpentanoate (2-oxo-3-methylvalerate) and of (2R)-2,3-dihydroxy-3-methylbutanoate (2,3-dihydroxyisovalerate) into 2-oxo-3-methylbutanoate (2-oxoisovalerate), the penultimate precursor to L-isoleucine and L-valine, respectively. The sequence is that of Dihydroxy-acid dehydratase from Salmonella agona (strain SL483).